Reading from the N-terminus, the 142-residue chain is Hemoglobin subunit alpha (142 aa).

Residues 2–142 enclose the Globin domain; sequence VLSAADKGHV…VSTVLTSKYR (141 aa). Serine 4 is subject to Phosphoserine. Lysine 8 and lysine 12 each carry N6-succinyllysine. Lysine 17 carries the post-translational modification N6-acetyllysine; alternate. The residue at position 17 (lysine 17) is an N6-succinyllysine; alternate. At tyrosine 25 the chain carries Phosphotyrosine. Serine 36 is modified (phosphoserine). At lysine 41 the chain carries N6-succinyllysine. Serine 50 carries the post-translational modification Phosphoserine. Histidine 59 contacts O2. Heme b is bound at residue histidine 88. Position 103 is a phosphoserine (serine 103). Phosphothreonine is present on threonine 109. Residue serine 125 is modified to Phosphoserine. Phosphothreonine occurs at positions 135 and 138. Serine 139 bears the Phosphoserine mark.

This sequence belongs to the globin family. As to quaternary structure, heterotetramer of two alpha chains and two beta chains. As to expression, red blood cells.

Involved in oxygen transport from the lung to the various peripheral tissues. Its function is as follows. Hemopressin acts as an antagonist peptide of the cannabinoid receptor CNR1. Hemopressin-binding efficiently blocks cannabinoid receptor CNR1 and subsequent signaling. The chain is Hemoglobin subunit alpha (HBA) from Notamacropus eugenii (Tammar wallaby).